A 352-amino-acid polypeptide reads, in one-letter code: uncharacterized protein (352 aa).

The protein to M.pneumoniae MPN_633 (in the N-terminal section), and M.pneumoniae MPN_634 (in the C-terminal section).

This is an uncharacterized protein from Mycoplasma pneumoniae (strain ATCC 29342 / M129 / Subtype 1) (Mycoplasmoides pneumoniae).